Consider the following 157-residue polypeptide: Crossover junction endodeoxyribonuclease RuvC (157 aa).

Active-site residues include Asp7, Glu66, and Asp139. 3 residues coordinate Mg(2+): Asp7, Glu66, and Asp139.

Belongs to the RuvC family. In terms of assembly, homodimer which binds Holliday junction (HJ) DNA. The HJ becomes 2-fold symmetrical on binding to RuvC with unstacked arms; it has a different conformation from HJ DNA in complex with RuvA. In the full resolvosome a probable DNA-RuvA(4)-RuvB(12)-RuvC(2) complex forms which resolves the HJ. Requires Mg(2+) as cofactor.

It is found in the cytoplasm. It carries out the reaction Endonucleolytic cleavage at a junction such as a reciprocal single-stranded crossover between two homologous DNA duplexes (Holliday junction).. In terms of biological role, the RuvA-RuvB-RuvC complex processes Holliday junction (HJ) DNA during genetic recombination and DNA repair. Endonuclease that resolves HJ intermediates. Cleaves cruciform DNA by making single-stranded nicks across the HJ at symmetrical positions within the homologous arms, yielding a 5'-phosphate and a 3'-hydroxyl group; requires a central core of homology in the junction. The consensus cleavage sequence is 5'-(A/T)TT(C/G)-3'. Cleavage occurs on the 3'-side of the TT dinucleotide at the point of strand exchange. HJ branch migration catalyzed by RuvA-RuvB allows RuvC to scan DNA until it finds its consensus sequence, where it cleaves and resolves the cruciform DNA. Required for efficient infection in a mouse model system. The polypeptide is Crossover junction endodeoxyribonuclease RuvC (Helicobacter pylori (strain G27)).